A 122-amino-acid polypeptide reads, in one-letter code: Large ribosomal subunit protein uL14 (122 aa).

Belongs to the universal ribosomal protein uL14 family. Part of the 50S ribosomal subunit. Forms a cluster with proteins L3 and L19. In the 70S ribosome, L14 and L19 interact and together make contacts with the 16S rRNA in bridges B5 and B8.

In terms of biological role, binds to 23S rRNA. Forms part of two intersubunit bridges in the 70S ribosome. In Burkholderia vietnamiensis (strain G4 / LMG 22486) (Burkholderia cepacia (strain R1808)), this protein is Large ribosomal subunit protein uL14.